A 530-amino-acid polypeptide reads, in one-letter code: Ataxin-10 homolog (530 aa).

The protein belongs to the ataxin-10 family.

Its subcellular location is the cytoplasm. May play a role in the regulation of cytokinesis. In Candida glabrata (strain ATCC 2001 / BCRC 20586 / JCM 3761 / NBRC 0622 / NRRL Y-65 / CBS 138) (Yeast), this protein is Ataxin-10 homolog (CTR86).